Reading from the N-terminus, the 644-residue chain is MPEIKRLPESVANQISAGEVVERPASVVKELVENSLDAGSNKILIEIENGGKDLIRVKDNGHGIPSDEIEIAFDRYATSKITDINDLYSLKSLGFRGEALASIASVSILDIISRTKSQTKAIKMRLKGGKVISKEPCGASVGTDIIVKDLFFNTPARYKYLKTTRNEFKHISNIITREALAYPGVNFTLIHNGRIVLKTPGTGKTLDCIYAIYGKEMAQSLVKIDYEDRYIKVSGYISRPDYYRYNRSYEIFFVNKRAVHNSILNRGVEEAYQGLLPPGAYPVVFLNLKLNPILVDVNVHPTKKEVKFSRDKVIKEVIQNGINIELSKLDKSPRLKRNINPLNRDDKTKDKSEYQKIKLPEDKEQITNKSSDAGILKNQNPLDSQDSILLPSKKNGFYSKKNSQVSQNKFMDINNKLEKTEINDNYKKDKHYKTDSINIKDNSIKENKNKMDIPIKRVLGQIKNTYIIAEGRDGLYIIDQHNAHERILYQSFIEKYNNSEIVSQPLVVPVNIETTAPEAEVLKSYLPQLEKMGFKLEVFGINSFIVREVPSLIKKRSNKRVVREVIDKLLEHDKAMKPSELINEIISYMSCRGAIKAGEYLDKKEAEQIIEGLFKTDNPYRCPHGRPIIIHITEDDINKGMGRK.

The segment at 336 to 356 (KRNINPLNRDDKTKDKSEYQK) is disordered. Residues 343 to 356 (NRDDKTKDKSEYQK) are compositionally biased toward basic and acidic residues.

This sequence belongs to the DNA mismatch repair MutL/HexB family.

Its function is as follows. This protein is involved in the repair of mismatches in DNA. It is required for dam-dependent methyl-directed DNA mismatch repair. May act as a 'molecular matchmaker', a protein that promotes the formation of a stable complex between two or more DNA-binding proteins in an ATP-dependent manner without itself being part of a final effector complex. This chain is DNA mismatch repair protein MutL, found in Halothermothrix orenii (strain H 168 / OCM 544 / DSM 9562).